The following is a 52-amino-acid chain: UPF0057 membrane protein YqaE (52 aa).

2 helical membrane passes run 1 to 21 (MGFWRIVITIILPPLGVLLGK) and 23 to 43 (FGWAFIINILLTLLGYIPGLI).

The protein belongs to the UPF0057 (PMP3) family.

The protein resides in the cell membrane. This is UPF0057 membrane protein YqaE (yqaE) from Escherichia coli O157:H7.